The primary structure comprises 544 residues: Chaperonin GroEL (544 aa).

Residues 29 to 32, Lys50, 86 to 90, Gly413, 479 to 481, and Asp495 each bind ATP; these read TLGP, DGTTT, and DAA.

It belongs to the chaperonin (HSP60) family. As to quaternary structure, forms a cylinder of 14 subunits composed of two heptameric rings stacked back-to-back. Interacts with the co-chaperonin GroES.

It localises to the cytoplasm. The enzyme catalyses ATP + H2O + a folded polypeptide = ADP + phosphate + an unfolded polypeptide.. Together with its co-chaperonin GroES, plays an essential role in assisting protein folding. The GroEL-GroES system forms a nano-cage that allows encapsulation of the non-native substrate proteins and provides a physical environment optimized to promote and accelerate protein folding. This chain is Chaperonin GroEL, found in Borrelia turicatae (strain 91E135).